The chain runs to 1408 residues: DNA-directed RNA polymerase subunit beta' (1408 aa).

Residues cysteine 70, cysteine 72, cysteine 85, and cysteine 88 each coordinate Zn(2+). Mg(2+)-binding residues include aspartate 458, aspartate 460, and aspartate 462. 4 residues coordinate Zn(2+): cysteine 813, cysteine 887, cysteine 894, and cysteine 897. The interval 1387–1408 (AELEAATATAPADAGGDSPATE) is disordered. The segment covering 1389 to 1408 (LEAATATAPADAGGDSPATE) has biased composition (low complexity).

This sequence belongs to the RNA polymerase beta' chain family. In terms of assembly, the RNAP catalytic core consists of 2 alpha, 1 beta, 1 beta' and 1 omega subunit. When a sigma factor is associated with the core the holoenzyme is formed, which can initiate transcription. It depends on Mg(2+) as a cofactor. Zn(2+) serves as cofactor.

The catalysed reaction is RNA(n) + a ribonucleoside 5'-triphosphate = RNA(n+1) + diphosphate. Its function is as follows. DNA-dependent RNA polymerase catalyzes the transcription of DNA into RNA using the four ribonucleoside triphosphates as substrates. The polypeptide is DNA-directed RNA polymerase subunit beta' (Polaromonas sp. (strain JS666 / ATCC BAA-500)).